Reading from the N-terminus, the 297-residue chain is Bifunctional protein FolD 2 (297 aa).

NADP(+)-binding positions include 172-174, threonine 199, and valine 240; that span reads GRG.

It belongs to the tetrahydrofolate dehydrogenase/cyclohydrolase family. Homodimer.

The catalysed reaction is (6R)-5,10-methylene-5,6,7,8-tetrahydrofolate + NADP(+) = (6R)-5,10-methenyltetrahydrofolate + NADPH. It carries out the reaction (6R)-5,10-methenyltetrahydrofolate + H2O = (6R)-10-formyltetrahydrofolate + H(+). It functions in the pathway one-carbon metabolism; tetrahydrofolate interconversion. Functionally, catalyzes the oxidation of 5,10-methylenetetrahydrofolate to 5,10-methenyltetrahydrofolate and then the hydrolysis of 5,10-methenyltetrahydrofolate to 10-formyltetrahydrofolate. The sequence is that of Bifunctional protein FolD 2 from Paenarthrobacter aurescens (strain TC1).